A 451-amino-acid chain; its full sequence is mRNA cleavage and polyadenylation factor CLP1 (451 aa).

ATP is bound by residues Glu-33, Lys-72, and 133–138 (NTGKTA).

This sequence belongs to the Clp1 family. Clp1 subfamily. As to quaternary structure, component of a pre-mRNA cleavage factor complex. Interacts directly with PCF11.

The protein localises to the nucleus. Its function is as follows. Required for endonucleolytic cleavage during polyadenylation-dependent pre-mRNA 3'-end formation. This is mRNA cleavage and polyadenylation factor CLP1 from Vanderwaltozyma polyspora (strain ATCC 22028 / DSM 70294 / BCRC 21397 / CBS 2163 / NBRC 10782 / NRRL Y-8283 / UCD 57-17) (Kluyveromyces polysporus).